The chain runs to 161 residues: Allophycocyanin beta chain (161 aa).

Asparagine 71 bears the N4-methylasparagine mark. Residue cysteine 81 coordinates (2R,3E)-phycocyanobilin.

The protein belongs to the phycobiliprotein family. In terms of assembly, heterodimer of an alpha and a beta chain. Post-translationally, contains one covalently linked phycocyanobilin chromophore.

The protein localises to the cellular thylakoid membrane. Light-harvesting photosynthetic bile pigment-protein from the phycobiliprotein complex. Allophycocyanin has a maximum absorption at approximately 650 nanometers. The polypeptide is Allophycocyanin beta chain (apcB) (Synechocystis sp. (strain ATCC 27184 / PCC 6803 / Kazusa)).